We begin with the raw amino-acid sequence, 483 residues long: Proline--tRNA ligase (483 aa).

This sequence belongs to the class-II aminoacyl-tRNA synthetase family. ProS type 3 subfamily. Homodimer.

It localises to the cytoplasm. The catalysed reaction is tRNA(Pro) + L-proline + ATP = L-prolyl-tRNA(Pro) + AMP + diphosphate. Functionally, catalyzes the attachment of proline to tRNA(Pro) in a two-step reaction: proline is first activated by ATP to form Pro-AMP and then transferred to the acceptor end of tRNA(Pro). The sequence is that of Proline--tRNA ligase from Mycoplasma genitalium (strain ATCC 33530 / DSM 19775 / NCTC 10195 / G37) (Mycoplasmoides genitalium).